The primary structure comprises 475 residues: Protein translocase subunit SecD (475 aa).

6 helical membrane passes run 7 to 27 (LLITVTLLAFSVWALWPSLKF), 313 to 333 (KGFMSSLIGIVLVFLFMFIYY), 338 to 358 (LIADVALSLNLIILMAIMAYL), 364 to 384 (LPGVAGIALTLAMSVDANVLI), 410 to 430 (FWTIFDANFTTLIAALFLFQF), and 437 to 457 (GFAVTLSIGLIVSMFTAVTVT).

This sequence belongs to the SecD/SecF family. SecD subfamily. As to quaternary structure, forms a complex with SecF. Part of the essential Sec protein translocation apparatus which comprises SecA, SecYEG and auxiliary proteins SecDF. Other proteins may also be involved.

It localises to the cell inner membrane. Functionally, part of the Sec protein translocase complex. Interacts with the SecYEG preprotein conducting channel. SecDF uses the proton motive force (PMF) to complete protein translocation after the ATP-dependent function of SecA. The protein is Protein translocase subunit SecD of Endomicrobium trichonymphae.